Reading from the N-terminus, the 331-residue chain is Polyprenyl transferase mpaA' (331 aa).

The next 8 membrane-spanning stretches (helical) occupy residues Met-27 to Leu-47, Ile-56 to Ala-76, Leu-127 to Leu-147, Val-159 to Trp-179, Gly-190 to Phe-210, Leu-240 to Ile-260, Trp-264 to Phe-284, and Ile-295 to Gly-315.

The protein belongs to the UbiA prenyltransferase family. Requires Mg(2+) as cofactor.

Its subcellular location is the golgi apparatus membrane. It carries out the reaction 5,7-dihydroxy-4-methylphthalide + (2E,6E)-farnesyl diphosphate = 4-farnesyl-3,5-dihydroxy-6-methylphthalide + diphosphate. It functions in the pathway secondary metabolite biosynthesis; terpenoid biosynthesis. Functionally, polyprenyl transferase; part of the gene cluster that mediates the biosynthesis of mycophenolic acid (MPA), the first isolated antibiotic natural product in the world obtained from a culture of Penicillium brevicompactum in 1893. MpaA' is a Golgi apparatus-associated enzyme that catalyzes the prenylation of 5,7-dihydroxy-4,6-dimethylphthalide (DHMP) to yield farnesyl-DHMP (FDHMP). The first step of the pathway is the synthesis of 5-methylorsellinic acid (5MOA) by the cytosolic polyketide synthase mpaC. 5MOA is then converted to the phthalide compound 5,7-dihydroxy-4,6-dimethylphthalide (DHMP) by the endoplasmic reticulum-bound cytochrome P450 monooxygenase mpaDE. MpaDE first catalyzes hydroxylation of 5-MOA to 4,6-dihydroxy-2-(hydroxymethyl)-3-methylbenzoic acid (DHMB). MpaDE then acts as a lactone synthase that catalyzes the ring closure to convert DHMB into DHMP. The next step is the prenylation of DHMP by the Golgi apparatus-associated prenyltransferase mpaA to yield farnesyl-DHMP (FDHMP). The ER-bound oxygenase mpaB then mediates the oxidative cleavage the C19-C20 double bond in FDHMP to yield FDHMP-3C via a mycophenolic aldehyde intermediate. The O-methyltransferase mpaG catalyzes the methylation of FDHMP-3C to yield MFDHMP-3C. After the cytosolic methylation of FDHMP-3C, MFDHMP-3C enters into peroxisomes probably via free diffusion due to its low molecular weight. Upon a peroxisomal CoA ligation reaction, catalyzed by a beta-oxidation component enzyme acyl-CoA ligase ACL891, MFDHMP-3C-CoA would then be restricted to peroxisomes for the following beta-oxidation pathway steps. The peroxisomal beta-oxidation machinery than converts MFDHMP-3C-CoA into MPA_CoA, via a beta-oxidation chain-shortening process. Finally mpaH acts as a peroxisomal acyl-CoA hydrolase with high substrate specificity toward MPA-CoA to release the final product MPA. The sequence is that of Polyprenyl transferase mpaA' from Penicillium brevicompactum.